Here is a 92-residue protein sequence, read N- to C-terminus: RNA-binding protein Hfq (92 aa).

The Sm domain maps to 9 to 68; it reads DPYLNALRRERIPVSIYLVNGIKLQGQIESFDQFVILLKNTVSQMVYKHAISTVVPARSV. Over residues 69 to 81 the composition is skewed to polar residues; the sequence is SHNNGGTSHTQQA. Positions 69–92 are disordered; sequence SHNNGGTSHTQQAPAVEAVADKAE.

This sequence belongs to the Hfq family. Homohexamer.

Its function is as follows. RNA chaperone that binds small regulatory RNA (sRNAs) and mRNAs to facilitate mRNA translational regulation in response to envelope stress, environmental stress and changes in metabolite concentrations. Also binds with high specificity to tRNAs. The sequence is that of RNA-binding protein Hfq from Actinobacillus pleuropneumoniae serotype 5b (strain L20).